We begin with the raw amino-acid sequence, 468 residues long: bZIP transcription factor 14 (468 aa).

2 disordered regions span residues 55 to 149 (SRRK…EGRA) and 234 to 272 (SPQS…LGKD). Composition is skewed to low complexity over residues 64 to 82 (SFVS…SSGS) and 95 to 106 (VTAASTESVSSS). A compositionally biased stretch (basic and acidic residues) spans 112–128 (KKADTDDRVQRSRERNR). Positions 117-165 (DDRVQRSRERNRIHARKTRQRKKEQMQSLEGRATDLKHEQIRLKQIINE) constitute a bZIP 1 domain. Positions 119 to 139 (RVQRSRERNRIHARKTRQRKK) are basic motif 1. Positions 129-138 (IHARKTRQRK) are enriched in basic residues. The tract at residues 145–159 (LEGRATDLKHEQIRL) is leucine-zipper 1. The segment covering 247–256 (ASTSDVSGDE) has biased composition (polar residues). The region spanning 279-333 (EELDQIRRERNRMHAKRTRDRKRIFTEEMAEMCRILEEENHLLRVHLGGLDSDFK) is the bZIP 2 domain. Positions 285–312 (RRERNRMHAKRTRDRKRIFTEEMAEMCR) are basic motif 2. The tract at residues 313–320 (ILEEENHL) is leucine-zipper 2. Residues 400–468 (ERQQREAERK…TTSLAAPVGW (69 aa)) form a disordered region. The span at 401 to 410 (RQQREAERKV) shows a compositional bias: basic and acidic residues. Low complexity predominate over residues 417 to 426 (SAASDTSTSD).

The protein belongs to the bZIP family.

The protein localises to the nucleus. In terms of biological role, transcriptional activator which binds to the C-box-like motif 5'-TGACGT-3' and A-box-like motif 5'-GTACGTA-3' of target promoters to positively regulate the expression of genes involved in the tricarboxylic acid (TCA) cycle in response to nitrogen starvation. May also regulate the TCA cycle during day-to-night transitions. This Phaeodactylum tricornutum (strain CCAP 1055/1) protein is bZIP transcription factor 14.